Consider the following 717-residue polypeptide: Probable metal-nicotianamine transporter YSL12 (717 aa).

The segment at 1-56 is disordered; sequence MASHANASGGGGDEEMVEASTLRHRHGAGKDANGVGTERQLAAAAAEGEEEGPSSV. Helical transmembrane passes span 76–96, 99–119, 144–164, 186–206, 248–268, 306–326, 351–371, 422–442, 450–470, 482–502, 536–556, 593–613, 636–656, and 671–691; these read AFVVSFFLSIMFSIIVMKLNL, GIIPSLNVSAGLLGFFFVRLW, CVVAAYGIAFSGGFGTYLFGM, IGWMIGFLFLVSFIGLLALVP, LGKFFLFSFVWGFFQWFYTAG, IVNVSVLLGGILSWGIMWPLI, VFISIALILGDGLYNFVKVLI, VAFGGYVAVAAVSIGTLPQIF, ILVAYVFAPVLAFCNAYGAGL, LAIFIFGAWAGASNGGVLVGL, FVSQVIGTAMGCVIAPCVFWL, LPKHCLTLCYIFFAAAIAINL, FYIGSYFAIDMFIGTVILFVW, and VASGLICGDGIWTLPQSILAL.

The protein belongs to the YSL (TC 2.A.67.2) family. As to expression, expressed in root cortex and stele.

It is found in the membrane. In terms of biological role, may be involved in the transport of nicotianamine-chelated metals. The sequence is that of Probable metal-nicotianamine transporter YSL12 (YSL12) from Oryza sativa subsp. japonica (Rice).